The chain runs to 150 residues: UPF0208 membrane protein VIBHAR_02941 (150 aa).

Helical transmembrane passes span 42-62 (FGIK…MAFN) and 70-90 (AIVV…WLGS).

Belongs to the UPF0208 family.

Its subcellular location is the cell inner membrane. The chain is UPF0208 membrane protein VIBHAR_02941 from Vibrio campbellii (strain ATCC BAA-1116).